We begin with the raw amino-acid sequence, 371 residues long: MSFNTFGHLFRVTTFGESHGPAIGCVVDGCPPGLRFTVDEVQAALDRRRPGQSRFTTQRREPDQVRVISGTMDHPEGGLVTTGTPIGLLIENVDQRSKDYADIAGSYRPGHADVTYDLKYGLRDHRGGGRSSARETAMRVAAGAIAAKVLPGVTVRAALTRIGEIEIDRARWDWAQVSENPFFCPDPETVPVWTDYLDGIRKRGSSVGAVIEVVAEGVPAGLGAPIYGKLDADLAAAFMSINAVKGVEIGEGFNAARLTGEENADEMRTGNDGRPYFLSNHAGGILGGISSGEPVVARFAVKPTSSILTPRRTVDKFGTEEDLITKGRHDPCVGIRAVPVGEAMMLCVLADHLLRHRGQVGTTPVWPFQRG.

Residues R48 and R54 each contribute to the NADP(+) site. FMN-binding positions include 130–132, 242–243, G287, 302–306, and R328; these read RSS, NA, and KPTSS.

Belongs to the chorismate synthase family. Homotetramer. FMNH2 serves as cofactor.

The enzyme catalyses 5-O-(1-carboxyvinyl)-3-phosphoshikimate = chorismate + phosphate. It participates in metabolic intermediate biosynthesis; chorismate biosynthesis; chorismate from D-erythrose 4-phosphate and phosphoenolpyruvate: step 7/7. Functionally, catalyzes the anti-1,4-elimination of the C-3 phosphate and the C-6 proR hydrogen from 5-enolpyruvylshikimate-3-phosphate (EPSP) to yield chorismate, which is the branch point compound that serves as the starting substrate for the three terminal pathways of aromatic amino acid biosynthesis. This reaction introduces a second double bond into the aromatic ring system. The polypeptide is Chorismate synthase (Azorhizobium caulinodans (strain ATCC 43989 / DSM 5975 / JCM 20966 / LMG 6465 / NBRC 14845 / NCIMB 13405 / ORS 571)).